Consider the following 54-residue polypeptide: Large ribosomal subunit protein bL32c (54 aa).

Positions Met-1–Ala-25 are enriched in basic residues. A disordered region spans residues Met-1–Lys-26.

Belongs to the bacterial ribosomal protein bL32 family.

It localises to the plastid. It is found in the chloroplast. This chain is Large ribosomal subunit protein bL32c, found in Thalassiosira pseudonana (Marine diatom).